The sequence spans 490 residues: Aspartyl/glutamyl-tRNA(Asn/Gln) amidotransferase subunit B (490 aa).

The protein belongs to the GatB/GatE family. GatB subfamily. As to quaternary structure, heterotrimer of A, B and C subunits.

The enzyme catalyses L-glutamyl-tRNA(Gln) + L-glutamine + ATP + H2O = L-glutaminyl-tRNA(Gln) + L-glutamate + ADP + phosphate + H(+). It carries out the reaction L-aspartyl-tRNA(Asn) + L-glutamine + ATP + H2O = L-asparaginyl-tRNA(Asn) + L-glutamate + ADP + phosphate + 2 H(+). Its function is as follows. Allows the formation of correctly charged Asn-tRNA(Asn) or Gln-tRNA(Gln) through the transamidation of misacylated Asp-tRNA(Asn) or Glu-tRNA(Gln) in organisms which lack either or both of asparaginyl-tRNA or glutaminyl-tRNA synthetases. The reaction takes place in the presence of glutamine and ATP through an activated phospho-Asp-tRNA(Asn) or phospho-Glu-tRNA(Gln). This Prochlorococcus marinus (strain MIT 9312) protein is Aspartyl/glutamyl-tRNA(Asn/Gln) amidotransferase subunit B.